A 399-amino-acid chain; its full sequence is Phosphopentomutase (399 aa).

The Mn(2+) site is built by Asp-10, Asp-296, His-301, Asp-337, His-338, and His-349.

It belongs to the phosphopentomutase family. Requires Mn(2+) as cofactor.

It localises to the cytoplasm. The enzyme catalyses 2-deoxy-alpha-D-ribose 1-phosphate = 2-deoxy-D-ribose 5-phosphate. It carries out the reaction alpha-D-ribose 1-phosphate = D-ribose 5-phosphate. Its pathway is carbohydrate degradation; 2-deoxy-D-ribose 1-phosphate degradation; D-glyceraldehyde 3-phosphate and acetaldehyde from 2-deoxy-alpha-D-ribose 1-phosphate: step 1/2. Isomerase that catalyzes the conversion of deoxy-ribose 1-phosphate (dRib-1-P) and ribose 1-phosphate (Rib-1-P) to deoxy-ribose 5-phosphate (dRib-5-P) and ribose 5-phosphate (Rib-5-P), respectively. The sequence is that of Phosphopentomutase from Idiomarina loihiensis (strain ATCC BAA-735 / DSM 15497 / L2-TR).